We begin with the raw amino-acid sequence, 214 residues long: Outer-membrane lipoprotein LolB (214 aa).

Residues 1–25 form the signal peptide; it reads MNNLKRLTKTIFSCFTLSALLLLAG. Cys-26 is lipidated: N-palmitoyl cysteine. Cys-26 is lipidated: S-diacylglycerol cysteine. A compositionally biased stretch (polar residues) spans 143 to 160; it reads QVIESDSQGKPKQLTNTQ. Positions 143 to 163 are disordered; the sequence is QVIESDSQGKPKQLTNTQTPP.

Belongs to the LolB family. As to quaternary structure, monomer.

It is found in the cell outer membrane. Plays a critical role in the incorporation of lipoproteins in the outer membrane after they are released by the LolA protein. The protein is Outer-membrane lipoprotein LolB of Shewanella baltica (strain OS223).